Here is a 309-residue protein sequence, read N- to C-terminus: Dihydroorotate dehydrogenase B (NAD(+)), catalytic subunit (309 aa).

FMN-binding positions include Ser-21 and 45–46 (KA). Residues Lys-45 and 69-73 (NAIGL) each bind substrate. FMN is bound by residues Asn-99 and Asn-127. Asn-127 is a binding site for substrate. The active-site Nucleophile is Cys-130. Residues Lys-165 and Ile-191 each contribute to the FMN site. Residue 192-193 (NT) coordinates substrate. FMN is bound by residues Gly-217, 243 to 244 (GG), and 265 to 266 (GT).

The protein belongs to the dihydroorotate dehydrogenase family. Type 1 subfamily. In terms of assembly, heterotetramer of 2 PyrK and 2 PyrD type B subunits. Requires FMN as cofactor.

The protein resides in the cytoplasm. It carries out the reaction (S)-dihydroorotate + NAD(+) = orotate + NADH + H(+). It participates in pyrimidine metabolism; UMP biosynthesis via de novo pathway; orotate from (S)-dihydroorotate (NAD(+) route): step 1/1. Functionally, catalyzes the conversion of dihydroorotate to orotate with NAD(+) as electron acceptor. The polypeptide is Dihydroorotate dehydrogenase B (NAD(+)), catalytic subunit (pyrD) (Bacillus cereus (strain B4264)).